We begin with the raw amino-acid sequence, 284 residues long: Cell division protein FtsQ (284 aa).

Positions 1–10 (MAFGKSKNRR) are enriched in basic residues. A disordered region spans residues 1-23 (MAFGKSKNRRRQDAAQQKEAVRG). Residues 1–34 (MAFGKSKNRRRQDAAQQKEAVRGAVRSQGPRALK) lie on the Cytoplasmic side of the membrane. A helical transmembrane segment spans residues 35–52 (VLGLTLGTGLLVWGGAAL). The Periplasmic portion of the chain corresponds to 53 to 284 (REWTLTSPRF…ASERSGASMR (232 aa)). The 69-residue stretch at 62 to 130 (FELEAVSFSG…NRVSVEVTEH (69 aa)) folds into the POTRA domain.

Belongs to the FtsQ/DivIB family. FtsQ subfamily.

Its subcellular location is the cell inner membrane. Its function is as follows. Essential cell division protein. The chain is Cell division protein FtsQ from Myxococcus fulvus (strain ATCC BAA-855 / HW-1).